The primary structure comprises 71 residues: DNA gyrase inhibitor YacG (71 aa).

Residues Cys-7, Cys-10, Cys-26, and Cys-30 each coordinate Zn(2+).

Belongs to the DNA gyrase inhibitor YacG family. As to quaternary structure, interacts with GyrB. It depends on Zn(2+) as a cofactor.

Functionally, inhibits all the catalytic activities of DNA gyrase by preventing its interaction with DNA. Acts by binding directly to the C-terminal domain of GyrB, which probably disrupts DNA binding by the gyrase. In Shewanella amazonensis (strain ATCC BAA-1098 / SB2B), this protein is DNA gyrase inhibitor YacG.